The following is a 360-amino-acid chain: 3-dehydroquinate synthase (360 aa).

NAD(+) contacts are provided by residues 69–74 (DGEKYK), 103–107 (GVVGD), 127–128 (TT), lysine 140, lysine 149, and 167–170 (TLDT). 3 residues coordinate Zn(2+): glutamate 182, histidine 246, and histidine 263.

Belongs to the sugar phosphate cyclases superfamily. Dehydroquinate synthase family. Requires Co(2+) as cofactor. The cofactor is Zn(2+). NAD(+) serves as cofactor.

The protein resides in the cytoplasm. The enzyme catalyses 7-phospho-2-dehydro-3-deoxy-D-arabino-heptonate = 3-dehydroquinate + phosphate. It functions in the pathway metabolic intermediate biosynthesis; chorismate biosynthesis; chorismate from D-erythrose 4-phosphate and phosphoenolpyruvate: step 2/7. Functionally, catalyzes the conversion of 3-deoxy-D-arabino-heptulosonate 7-phosphate (DAHP) to dehydroquinate (DHQ). The chain is 3-dehydroquinate synthase from Vesicomyosocius okutanii subsp. Calyptogena okutanii (strain HA).